Consider the following 416-residue polypeptide: Gamma-glutamyl phosphate reductase (416 aa).

Belongs to the gamma-glutamyl phosphate reductase family.

Its subcellular location is the cytoplasm. The catalysed reaction is L-glutamate 5-semialdehyde + phosphate + NADP(+) = L-glutamyl 5-phosphate + NADPH + H(+). Its pathway is amino-acid biosynthesis; L-proline biosynthesis; L-glutamate 5-semialdehyde from L-glutamate: step 2/2. In terms of biological role, catalyzes the NADPH-dependent reduction of L-glutamate 5-phosphate into L-glutamate 5-semialdehyde and phosphate. The product spontaneously undergoes cyclization to form 1-pyrroline-5-carboxylate. This Streptococcus mutans serotype c (strain ATCC 700610 / UA159) protein is Gamma-glutamyl phosphate reductase.